The sequence spans 1350 residues: MVFSLKESSDSISKPSSLKNSTIIENPEILNNNNNNNNSNNIIKSPNFLLSQKQRSINISNEQTQRELNNNGGNLDHRDPNSPKYLTSSHSSVVIPQDNSNNNNNNNIRISTSPILTEISENGLLESPTSPIRTSSTPTTPTSPPFITSPPFITSPKGLNSPRRLVGFFSKSTSYQSLLANNNNNNNNSNNSNNNSNSSNSNISCSNNSNKISRLINNSNTTDSNASIRSSNNNNDDFDNNDDEDLNSINNSSGIGIGVSSDYSLMGSSSSINGNTTTTTTNTYSYNDNDNVNEYSPKGKRLIRHEKSKSSPPLSPITPYYENLVIKGNYTNSNNYNNYNNYYYNNNSSGNNNNNNNNNNNNNNNNNNNNNNNNNNNNNNNNISGNSGYNNSRDDLFKRPFEMNKESSPTNSLIPNVSALKLNRVIKSSNGSTIFTSTSSDIASENDNNKNNENENENENENENENENENDNDSDSENENENDNSIGNKSNKSNSELSIEEQEKKKEKDLENYINMINNSGFITNDSNNNNNNNNSGNNNSFISNGSPFSPIKEESPQPSPTFSPKPTLQRQRSNSKNVLYSPNASPSNSCKIPTPPLLHNISIIDTSNNNNNNSNNIENQNNNNNNIDNNIDNNIDSIDKKLKNNNNNNNNNNNNNNNNNNNNNNNNNNNNNNNNNNNNDDDDDDNNIKKTPNNKINTNENPMIITNSVLKRSGNIDYLQINNNYVIPSPSPGTQLSECTNQQMKYNPPVSIVDFTLIEKIGEGGFGQVFLAKKKDTGEIVAIKRMSKELIWSKNKVSHIKNERDILAQGKNHRWIVSLVYSFQDDQYLYLAMEYVPGGDLRSLLSALNSLDEDSARFYMAEMVEAVDSCHRLGYCHRDLKPENFLISRDGHVKLADFGLSKNVVTRYHLRSASADNTINTTTSTPTTSSNINQLSSSMIEHTPMKFGAAANGNGPLNSSVTDFGSFKDLSVAARLAYSVVGSPFYMAPEVLQATRGYGDEVDWWSLGCMFYEFIFGVPPFDGDSPEEVMETVLKWKTMLQRPDGVSDELWDLISGLINDGSTRLGSGEKGVENIKNHIFFNGVPWGKLHDLDPPFVPLLQGDYDTTYFENTEKLDNNFLLQQTQQLSLLPPPLPPPPQTPTQPQQPSLPPQTPNDKMIFDKIRSPVVYTNTHSGNIITSRSRPRNILGFTYPRADDQPLLWNNNNNNNNNNNNNNNNLLKNFEELTILNNNNNKNKNKGNSNNNNNNNNNNNNNNNNNNNNNNNNNNNNNSNNNKNNSNNKTVTIPISTGRLLNEIDNCNNNNNNDENNINTGNLTPPNSSPFNSGENLNFEKQEPTSPYGSYSKQQQ.

8 disordered regions span residues 66–109 (RELN…NNIR), 121–159 (ENGLLESPTSPIRTSSTPTTPTSPPFITSPPFITSPKGL), 179–249 (LANN…LNSI), 270–296 (SSINGNTTTTTTNTYSYNDNDNVNEYS), 337–396 (NNYN…RDDL), 431–506 (GSTI…EKKK), 525–596 (NDSN…IPTP), and 612–701 (NNNS…NTNE). Positions 84–98 (KYLTSSHSSVVIPQD) are enriched in polar residues. Composition is skewed to low complexity over residues 127–140 (SPTSPIRTSSTPTT) and 181–210 (NNNNNNNNSNNSNNNSNSSNSNISCSNNSN). The segment covering 211–222 (KISRLINNSNTT) has biased composition (polar residues). The span at 223 to 235 (DSNASIRSSNNNN) shows a compositional bias: low complexity. Positions 236–246 (DDFDNNDDEDL) are enriched in acidic residues. 2 stretches are compositionally biased toward low complexity: residues 270 to 293 (SSINGNTTTTTTNTYSYNDNDNVN) and 337 to 391 (NNYN…GYNN). Residues 431–443 (GSTIFTSTSSDIA) are compositionally biased toward polar residues. Acidic residues predominate over residues 454 to 482 (NENENENENENENENENDNDSDSENENEN). Composition is skewed to low complexity over residues 483–495 (DNSIGNKSNKSNS) and 525–551 (NDSNNNNNNNNSGNNNSFISNGSPFSP). Polar residues predominate over residues 565–592 (PKPTLQRQRSNSKNVLYSPNASPSNSCK). 3 stretches are compositionally biased toward low complexity: residues 612–637 (NNNSNNIENQNNNNNNIDNNIDNNID), 645–679 (NNNNNNNNNNNNNNNNNNNNNNNNNNNNNNNNNNN), and 690–701 (KKTPNNKINTNE). In terms of domain architecture, Protein kinase spans 756 to 1082 (FTLIEKIGEG…VENIKNHIFF (327 aa)). Residues 762-770 (IGEGGFGQV) and K785 each bind ATP. D880 (proton acceptor) is an active-site residue. Positions 1083–1203 (NGVPWGKLHD…PRADDQPLLW (121 aa)) constitute an AGC-kinase C-terminal domain. 4 disordered regions span residues 1129–1159 (SLLPPPLPPPPQTPTQPQQPSLPPQTPNDKM), 1190–1219 (GFTYPRADDQPLLWNNNNNNNNNNNNNNNN), 1232–1285 (NNNN…NKTV), and 1300–1350 (NCNN…KQQQ). Pro residues predominate over residues 1131–1142 (LPPPLPPPPQTP). 3 stretches are compositionally biased toward low complexity: residues 1204–1219 (NNNNNNNNNNNNNNNN), 1232–1283 (NNNN…SNNK), and 1300–1313 (NCNNNNNNDENNIN). Composition is skewed to polar residues over residues 1314–1330 (TGNLTPPNSSPFNSGEN) and 1338–1350 (PTSPYGSYSKQQQ).

This sequence belongs to the protein kinase superfamily. AGC Ser/Thr protein kinase family.

The catalysed reaction is L-seryl-[protein] + ATP = O-phospho-L-seryl-[protein] + ADP + H(+). It carries out the reaction L-threonyl-[protein] + ATP = O-phospho-L-threonyl-[protein] + ADP + H(+). In Dictyostelium discoideum (Social amoeba), this protein is Probable serine/threonine-protein kinase DDB_G0278845.